The sequence spans 304 residues: MSNVLELTIPASTANLGVGFDSIGMALDKFLHLSVKETSGTKWEYIFHDDASKQLPTDETNFIYHVAQQVAAKYSVDLPNLCIEMRSDIPLARGLGSSASALVGAIYIANYFGDIQLSKHEVLQLATEIEGHPDNVAPTIYGGLIAGYYNDVTKETSVAHIDIPDVDVIVTIPTYELKTEASRRALPQKLTHSEAVKSSAISNTMICALAQHNYELAGKLMQQDGFHEPYRQHLIAEFDEVKTIASQHNAYATVISGAGPTILIFSRKENSGELVRALNRNVVTCHSELVDINVSGVKERIVYQ.

90–100 (PLARGLGSSAS) serves as a coordination point for ATP.

It belongs to the GHMP kinase family. Homoserine kinase subfamily.

Its subcellular location is the cytoplasm. It catalyses the reaction L-homoserine + ATP = O-phospho-L-homoserine + ADP + H(+). It functions in the pathway amino-acid biosynthesis; L-threonine biosynthesis; L-threonine from L-aspartate: step 4/5. Functionally, catalyzes the ATP-dependent phosphorylation of L-homoserine to L-homoserine phosphate. This Staphylococcus aureus (strain MRSA252) protein is Homoserine kinase.